A 107-amino-acid polypeptide reads, in one-letter code: U1-lycotoxin-Ls1b (107 aa).

Residues 1-20 (MMKVLVVVALLATLISYSSS) form the signal peptide. Residues 21-41 (EGIDDLEADELLSLMANEQTR) constitute a propeptide that is removed on maturation. Cystine bridges form between Cys-44/Cys-59, Cys-51/Cys-68, Cys-58/Cys-86, and Cys-70/Cys-84.

Belongs to the neurotoxin 19 (CSTX) family. 04 (U1-Lctx) subfamily. Expressed by the venom gland.

The protein resides in the secreted. The protein is U1-lycotoxin-Ls1b of Lycosa singoriensis (Wolf spider).